The chain runs to 473 residues: Thermostable beta-glucosidase B (473 aa).

The active-site Proton donor is glutamate 196. The active-site Nucleophile is the glutamate 378.

This sequence belongs to the glycosyl hydrolase 1 family.

It localises to the cytoplasm. The enzyme catalyses Hydrolysis of terminal, non-reducing beta-D-glucosyl residues with release of beta-D-glucose.. The chain is Thermostable beta-glucosidase B (bglB) from Thermobispora bispora (Microbispora bispora).